The primary structure comprises 230 residues: uncharacterized protein (230 aa).

It belongs to the transferase hexapeptide repeat family.

This is an uncharacterized protein from Escherichia coli O6:K15:H31 (strain 536 / UPEC).